We begin with the raw amino-acid sequence, 827 residues long: Glycerol-3-phosphate acyltransferase (827 aa).

An HXXXXD motif motif is present at residues 325–330 (CHRSHM).

Belongs to the GPAT/DAPAT family.

The protein localises to the cell inner membrane. It catalyses the reaction sn-glycerol 3-phosphate + an acyl-CoA = a 1-acyl-sn-glycero-3-phosphate + CoA. The protein operates within phospholipid metabolism; CDP-diacylglycerol biosynthesis; CDP-diacylglycerol from sn-glycerol 3-phosphate: step 1/3. The sequence is that of Glycerol-3-phosphate acyltransferase from Shigella dysenteriae serotype 1 (strain Sd197).